Here is a 211-residue protein sequence, read N- to C-terminus: Large ribosomal subunit protein bL25 (211 aa).

Residues 188–211 (HREEEKAPEETGEAAPAPTPETGQ) form a disordered region. A compositionally biased stretch (low complexity) spans 200-211 (EAAPAPTPETGQ).

It belongs to the bacterial ribosomal protein bL25 family. CTC subfamily. As to quaternary structure, part of the 50S ribosomal subunit; part of the 5S rRNA/L5/L18/L25 subcomplex. Contacts the 5S rRNA. Binds to the 5S rRNA independently of L5 and L18.

In terms of biological role, this is one of the proteins that binds to the 5S RNA in the ribosome where it forms part of the central protuberance. In Desulforudis audaxviator (strain MP104C), this protein is Large ribosomal subunit protein bL25.